We begin with the raw amino-acid sequence, 447 residues long: ATP-dependent protease ATPase subunit HslU (447 aa).

Residues I18, G60–E65, D259, E325, and R397 contribute to the ATP site.

This sequence belongs to the ClpX chaperone family. HslU subfamily. As to quaternary structure, a double ring-shaped homohexamer of HslV is capped on each side by a ring-shaped HslU homohexamer. The assembly of the HslU/HslV complex is dependent on binding of ATP.

It localises to the cytoplasm. Its function is as follows. ATPase subunit of a proteasome-like degradation complex; this subunit has chaperone activity. The binding of ATP and its subsequent hydrolysis by HslU are essential for unfolding of protein substrates subsequently hydrolyzed by HslV. HslU recognizes the N-terminal part of its protein substrates and unfolds these before they are guided to HslV for hydrolysis. The chain is ATP-dependent protease ATPase subunit HslU from Burkholderia lata (strain ATCC 17760 / DSM 23089 / LMG 22485 / NCIMB 9086 / R18194 / 383).